A 1141-amino-acid chain; its full sequence is Collagen alpha-1(XXVIII) chain (1141 aa).

An N-terminal signal peptide occupies residues 1–20 (MRRRDVAFCLLLLPAFMTQA). The VWFA 1 domain maps to 48–227 (DVVFILDSSE…TLVDRIQERL (180 aa)). Positions 242–770 (CEKGEPGDPG…KQGLQGPKGD (529 aa)) are disordered. Collagen-like domains lie at 243–300 (EKGE…RGEC), 301–358 (GKPG…GAPG), 501–544 (GPKG…MPGK), 545–588 (GQPG…MPGA), and 733–769 (GQKG…GPKG). Over residues 291–311 (KGDKGERGECGKPGMKGDKGP) the composition is skewed to basic and acidic residues. The segment covering 335-344 (PKGFQGNKGE) has biased composition (low complexity). Residues 345–356 (PGPPGPYGPPGA) are compositionally biased toward pro residues. Positions 735–753 (KGEHGDRGDVGRKGEKGET) are enriched in basic and acidic residues. Positions 798–976 (ELVFVIDSSE…TLQDTLKQKL (179 aa)) constitute a VWFA 2 domain. One can recognise a BPTI/Kunitz inhibitor domain in the interval 1088 to 1138 (CEEALKPGECGDYVVRWYYDKQVNSCARFWFSGCNGSGNRFHSEKECRETC). 3 disulfide bridges follow: cysteine 1088–cysteine 1138, cysteine 1097–cysteine 1121, and cysteine 1113–cysteine 1134.

The protein belongs to the VWA-containing collagen family. In terms of assembly, trimer or homomer. Secreted into as a 135 kDa monomer under reducing conditions and as a homotrimer under non-reducing conditions. Expressed in skin, intestine, sternum, brain and kidney. Lower expression is also observed in heart, lung, sciatic nerve, dorsal root ganglia, peripheral nerves and calvaria of newborn mice and in intestine and brain of adult mice. Found in basement membrane surrounding a particular subset of Schwann cells in adult sciatic nerve.

The protein localises to the secreted. It is found in the extracellular space. Its subcellular location is the extracellular matrix. It localises to the basement membrane. Its function is as follows. May act as a cell-binding protein. The polypeptide is Collagen alpha-1(XXVIII) chain (Col28a1) (Mus musculus (Mouse)).